A 293-amino-acid polypeptide reads, in one-letter code: Glutamyl-Q tRNA(Asp) synthetase (293 aa).

L-glutamate is bound by residues arginine 8–threonine 12 and glutamate 44. The 'HIGH' region motif lies at proline 11 to serine 21. Cysteine 100, cysteine 102, tyrosine 114, and cysteine 118 together coordinate Zn(2+). L-glutamate-binding residues include tyrosine 171 and arginine 189. A 'KMSKS' region motif is present at residues lysine 227–serine 231. Lysine 230 provides a ligand contact to ATP.

The protein belongs to the class-I aminoacyl-tRNA synthetase family. GluQ subfamily. Zn(2+) serves as cofactor.

Functionally, catalyzes the tRNA-independent activation of glutamate in presence of ATP and the subsequent transfer of glutamate onto a tRNA(Asp). Glutamate is transferred on the 2-amino-5-(4,5-dihydroxy-2-cyclopenten-1-yl) moiety of the queuosine in the wobble position of the QUC anticodon. The protein is Glutamyl-Q tRNA(Asp) synthetase of Pseudomonas paraeruginosa (strain DSM 24068 / PA7) (Pseudomonas aeruginosa (strain PA7)).